The primary structure comprises 477 residues: Charged multivesicular body protein 7 (477 aa).

Coiled-coil stretches lie at residues 252–280 (KLQT…TIKE) and 382–428 (ESLS…QQQQ). Composition is skewed to basic and acidic residues over residues 411–424 (EEKQ…KEKQ) and 465–477 (KQDE…SELI). A disordered region spans residues 411–477 (EEKQKQKQIE…ENKQKTSELI (67 aa)).

This sequence belongs to the SNF7 family.

It localises to the cytoplasm. Plays a role in the endosomal sorting pathway. This is Charged multivesicular body protein 7 (chmp7) from Dictyostelium discoideum (Social amoeba).